A 333-amino-acid polypeptide reads, in one-letter code: MSGFYDVIKPKTARPPVWFLRQVGRYMPQYKELKGSQTLKAFFHNTEAITEATLLGPSLLKVDAAILFADILSLLDGFNISYDFSPGPQISFSPYEELIFTKDPQETFSYLLQAIKNLVKALDVPLIAFAASPFTMASYLLDGGASKDFPKTMAFLYQYPDKFDALLKKLTEGTVIYLKEQIHAGAAAIQLFESSSLRLPSELFSRYVTAPNTQLISQLKQCIASPISLFCRCFDENFLDLYSIGADTLHPDYHVNLNKIYKTVPQPGSLQGNIDPTLFLLPQDQLLAHLEKYLTTLKDQPNYIFNSGHGILPETPLENVQAAVLCLTSISTS.

Residues 21 to 25, aspartate 70, tyrosine 139, serine 194, and histidine 309 contribute to the substrate site; that span reads RQVGR.

Belongs to the uroporphyrinogen decarboxylase family. In terms of assembly, homodimer.

The protein resides in the cytoplasm. It catalyses the reaction uroporphyrinogen III + 4 H(+) = coproporphyrinogen III + 4 CO2. It functions in the pathway porphyrin-containing compound metabolism; protoporphyrin-IX biosynthesis; coproporphyrinogen-III from 5-aminolevulinate: step 4/4. Its function is as follows. Catalyzes the decarboxylation of four acetate groups of uroporphyrinogen-III to yield coproporphyrinogen-III. The protein is Uroporphyrinogen decarboxylase of Chlamydia caviae (strain ATCC VR-813 / DSM 19441 / 03DC25 / GPIC) (Chlamydophila caviae).